Consider the following 306-residue polypeptide: UDP-3-O-acyl-N-acetylglucosamine deacetylase (306 aa).

Positions 79, 238, and 242 each coordinate Zn(2+). Histidine 265 acts as the Proton donor in catalysis.

It belongs to the LpxC family. Zn(2+) is required as a cofactor.

It carries out the reaction a UDP-3-O-[(3R)-3-hydroxyacyl]-N-acetyl-alpha-D-glucosamine + H2O = a UDP-3-O-[(3R)-3-hydroxyacyl]-alpha-D-glucosamine + acetate. Its pathway is glycolipid biosynthesis; lipid IV(A) biosynthesis; lipid IV(A) from (3R)-3-hydroxytetradecanoyl-[acyl-carrier-protein] and UDP-N-acetyl-alpha-D-glucosamine: step 2/6. Catalyzes the hydrolysis of UDP-3-O-myristoyl-N-acetylglucosamine to form UDP-3-O-myristoylglucosamine and acetate, the committed step in lipid A biosynthesis. This Shewanella loihica (strain ATCC BAA-1088 / PV-4) protein is UDP-3-O-acyl-N-acetylglucosamine deacetylase.